A 212-amino-acid polypeptide reads, in one-letter code: Uridine kinase (212 aa).

13 to 20 (GASASGKS) contributes to the ATP binding site.

It belongs to the uridine kinase family.

Its subcellular location is the cytoplasm. The enzyme catalyses uridine + ATP = UMP + ADP + H(+). The catalysed reaction is cytidine + ATP = CMP + ADP + H(+). It functions in the pathway pyrimidine metabolism; CTP biosynthesis via salvage pathway; CTP from cytidine: step 1/3. It participates in pyrimidine metabolism; UMP biosynthesis via salvage pathway; UMP from uridine: step 1/1. This is Uridine kinase from Shewanella oneidensis (strain ATCC 700550 / JCM 31522 / CIP 106686 / LMG 19005 / NCIMB 14063 / MR-1).